A 196-amino-acid polypeptide reads, in one-letter code: Hibernation-associated plasma protein HP-20 (196 aa).

A signal peptide spans 1–23 (MTDVWRLAIFVLMVNVLNDQVSC). The Collagen-like domain maps to 25-63 (GPPGPVGYPGVPGVPGPRGPPGQPGAAGRPGDPGPKGPS). Pro residues predominate over residues 28 to 47 (GPVGYPGVPGVPGPRGPPGQ). The tract at residues 28 to 64 (GPVGYPGVPGVPGPRGPPGQPGAAGRPGDPGPKGPSV) is disordered. A C1q domain is found at 67-196 (PCRERSAFTV…IYFSGFLISS (130 aa)).

Plasma; synthesized in the liver.

The protein localises to the secreted. Plasma proteins HP-20, HP-25, HP-27 and HP-55 form a 140 kDa complex via disulfide bonds in the plasma and are hibernation specific. In Tamias sibiricus (Siberian chipmunk), this protein is Hibernation-associated plasma protein HP-20.